We begin with the raw amino-acid sequence, 440 residues long: Serine hydroxymethyltransferase (440 aa).

Residues leucine 119 and 123-125 (GHL) each bind (6S)-5,6,7,8-tetrahydrofolate. An N6-(pyridoxal phosphate)lysine modification is found at lysine 228. Residue 370 to 372 (SPF) participates in (6S)-5,6,7,8-tetrahydrofolate binding.

Belongs to the SHMT family. Homodimer. The cofactor is pyridoxal 5'-phosphate.

Its subcellular location is the cytoplasm. It catalyses the reaction (6R)-5,10-methylene-5,6,7,8-tetrahydrofolate + glycine + H2O = (6S)-5,6,7,8-tetrahydrofolate + L-serine. The protein operates within one-carbon metabolism; tetrahydrofolate interconversion. Its pathway is amino-acid biosynthesis; glycine biosynthesis; glycine from L-serine: step 1/1. In terms of biological role, catalyzes the reversible interconversion of serine and glycine with tetrahydrofolate (THF) serving as the one-carbon carrier. This reaction serves as the major source of one-carbon groups required for the biosynthesis of purines, thymidylate, methionine, and other important biomolecules. Also exhibits THF-independent aldolase activity toward beta-hydroxyamino acids, producing glycine and aldehydes, via a retro-aldol mechanism. The polypeptide is Serine hydroxymethyltransferase (Chloroherpeton thalassium (strain ATCC 35110 / GB-78)).